Reading from the N-terminus, the 687-residue chain is Histone deacetylase clr3 (687 aa).

The histone deacetylase stretch occupies residues 55–385; it reads KKSGLCYDPR…ALAVAQSLLG (331 aa). Residue H195 is part of the active site.

Belongs to the histone deacetylase family. HD type 2 subfamily. Interacts with ccq1, clr1, clr2 and mit1.

It localises to the nucleus. Its subcellular location is the chromosome. The protein localises to the centromere. The protein resides in the telomere. The catalysed reaction is N(6)-acetyl-L-lysyl-[histone] + H2O = L-lysyl-[histone] + acetate. In terms of biological role, responsible for the deacetylation of lysine residues on the N-terminal part of the core histones (H2A, H2B, H3 and H4). Histone deacetylation gives a tag for epigenetic repression and plays an important role in transcriptional regulation, cell cycle progression and developmental events. Histone deacetylases act via the formation of large multiprotein complexes. Required for proper positioning of nucleosomes at heterochromatic loci and for transcriptional gene silencing (TGS) function of the Snf2/Hdac-containing repressor complex (SHREC). This is Histone deacetylase clr3 (clr3) from Schizosaccharomyces pombe (strain 972 / ATCC 24843) (Fission yeast).